Reading from the N-terminus, the 314-residue chain is Lipoyl synthase (314 aa).

7 residues coordinate [4Fe-4S] cluster: Cys-55, Cys-60, Cys-66, Cys-81, Cys-85, Cys-88, and Ser-292. Residues 67-281 (WEDREATFLI…TQYAEGLGFS (215 aa)) form the Radical SAM core domain.

It belongs to the radical SAM superfamily. Lipoyl synthase family. Requires [4Fe-4S] cluster as cofactor.

The protein localises to the cytoplasm. The enzyme catalyses [[Fe-S] cluster scaffold protein carrying a second [4Fe-4S](2+) cluster] + N(6)-octanoyl-L-lysyl-[protein] + 2 oxidized [2Fe-2S]-[ferredoxin] + 2 S-adenosyl-L-methionine + 4 H(+) = [[Fe-S] cluster scaffold protein] + N(6)-[(R)-dihydrolipoyl]-L-lysyl-[protein] + 4 Fe(3+) + 2 hydrogen sulfide + 2 5'-deoxyadenosine + 2 L-methionine + 2 reduced [2Fe-2S]-[ferredoxin]. It participates in protein modification; protein lipoylation via endogenous pathway; protein N(6)-(lipoyl)lysine from octanoyl-[acyl-carrier-protein]: step 2/2. Functionally, catalyzes the radical-mediated insertion of two sulfur atoms into the C-6 and C-8 positions of the octanoyl moiety bound to the lipoyl domains of lipoate-dependent enzymes, thereby converting the octanoylated domains into lipoylated derivatives. The sequence is that of Lipoyl synthase from Mycobacterium leprae (strain Br4923).